A 293-amino-acid chain; its full sequence is ATP synthase gamma chain (293 aa).

The protein belongs to the ATPase gamma chain family. F-type ATPases have 2 components, CF(1) - the catalytic core - and CF(0) - the membrane proton channel. CF(1) has five subunits: alpha(3), beta(3), gamma(1), delta(1), epsilon(1). CF(0) has three main subunits: a, b and c.

The protein resides in the cell inner membrane. Its function is as follows. Produces ATP from ADP in the presence of a proton gradient across the membrane. The gamma chain is believed to be important in regulating ATPase activity and the flow of protons through the CF(0) complex. This Psychrobacter cryohalolentis (strain ATCC BAA-1226 / DSM 17306 / VKM B-2378 / K5) protein is ATP synthase gamma chain.